A 143-amino-acid polypeptide reads, in one-letter code: AP-4 complex subunit sigma (143 aa).

Belongs to the adaptor complexes small subunit family. In terms of assembly, adaptor protein complex 4 (AP-4) is a heterotetramer composed of two large adaptins (epsilon-type subunit and beta-type subunit), a medium adaptin (mu-type subunit) and a small adaptin (sigma-type subunit). Interacts with EHD2.

It is found in the golgi apparatus. It localises to the trans-Golgi network. The protein resides in the membrane. The protein localises to the coated pit. In terms of biological role, subunit of novel type of clathrin- or non-clathrin-associated protein coat involved in targeting proteins from the trans-Golgi network (TGN) to the endosomal-lysosomal system. The protein is AP-4 complex subunit sigma of Arabidopsis thaliana (Mouse-ear cress).